Reading from the N-terminus, the 342-residue chain is N-acetyl-gamma-glutamyl-phosphate reductase (342 aa).

The active site involves C146.

This sequence belongs to the NAGSA dehydrogenase family. Type 1 subfamily.

It is found in the cytoplasm. It carries out the reaction N-acetyl-L-glutamate 5-semialdehyde + phosphate + NADP(+) = N-acetyl-L-glutamyl 5-phosphate + NADPH + H(+). The protein operates within amino-acid biosynthesis; L-arginine biosynthesis; N(2)-acetyl-L-ornithine from L-glutamate: step 3/4. Functionally, catalyzes the NADPH-dependent reduction of N-acetyl-5-glutamyl phosphate to yield N-acetyl-L-glutamate 5-semialdehyde. This is N-acetyl-gamma-glutamyl-phosphate reductase from Saccharopolyspora erythraea (strain ATCC 11635 / DSM 40517 / JCM 4748 / NBRC 13426 / NCIMB 8594 / NRRL 2338).